A 101-amino-acid polypeptide reads, in one-letter code: Small ribosomal subunit protein uS14 (101 aa).

Residues 1 to 10 (MAKKSAIEKN) show a composition bias toward basic and acidic residues. The tract at residues 1-23 (MAKKSAIEKNNRRKKMTKNAAPK) is disordered. A compositionally biased stretch (basic residues) spans 11 to 23 (NRRKKMTKNAAPK).

As to quaternary structure, part of the 30S ribosomal subunit. Contacts proteins S3 and S10.

In terms of biological role, binds 16S rRNA, required for the assembly of 30S particles and may also be responsible for determining the conformation of the 16S rRNA at the A site. The protein is Small ribosomal subunit protein uS14 of Rhodopseudomonas palustris (strain ATCC BAA-98 / CGA009).